The following is a 469-amino-acid chain: UDP-N-acetylmuramoylalanine--D-glutamate ligase (469 aa).

123-129 contacts ATP; sequence GTNGKST.

It belongs to the MurCDEF family.

It localises to the cytoplasm. It catalyses the reaction UDP-N-acetyl-alpha-D-muramoyl-L-alanine + D-glutamate + ATP = UDP-N-acetyl-alpha-D-muramoyl-L-alanyl-D-glutamate + ADP + phosphate + H(+). Its pathway is cell wall biogenesis; peptidoglycan biosynthesis. Functionally, cell wall formation. Catalyzes the addition of glutamate to the nucleotide precursor UDP-N-acetylmuramoyl-L-alanine (UMA). This is UDP-N-acetylmuramoylalanine--D-glutamate ligase from Phenylobacterium zucineum (strain HLK1).